The sequence spans 288 residues: G1/S-specific cyclin-D2 (288 aa).

In terms of domain architecture, Cyclin N-terminal spans 26-151 (LQNLLTIEER…VLGKLKWNLA (126 aa)). The segment at 264–288 (QHNGSKSVEDPDQATTPTDVRDVDL) is disordered. The residue at position 270 (Ser-270) is a Phosphoserine. Phosphothreonine is present on Thr-279.

Belongs to the cyclin family. Cyclin D subfamily. Interacts with either CDK4 or CDK6 protein kinase to form a serine/threonine kinase holoenzyme complex. The cyclin subunit imparts substrate specificity to the complex. Post-translationally, phosphorylation at Thr-279 by MAP kinases is required for ubiquitination and degradation by the DCX(AMBRA1) complex. Ubiquitinated by the DCX(AMBRA1) complex during the transition from G1 to S cell phase, leading to its degradation: ubiquitination is dependent on Thr-279 phosphorylation. The DCX(AMBRA1) complex represents the major regulator of CCND2 stability during the G1/S transition. Polyubiquitinated by the SCF(FBXL2) complex, leading to proteasomal degradation.

It is found in the nucleus. The protein resides in the cytoplasm. The protein localises to the nucleus membrane. Regulatory component of the cyclin D2-CDK4 (DC) complex that phosphorylates and inhibits members of the retinoblastoma (RB) protein family including RB1 and regulates the cell-cycle during G(1)/S transition. Phosphorylation of RB1 allows dissociation of the transcription factor E2F from the RB/E2F complex and the subsequent transcription of E2F target genes which are responsible for the progression through the G(1) phase. Hypophosphorylates RB1 in early G(1) phase. Cyclin D-CDK4 complexes are major integrators of various mitogenenic and antimitogenic signals. This Rattus norvegicus (Rat) protein is G1/S-specific cyclin-D2 (Ccnd2).